The chain runs to 205 residues: Thiamine-phosphate synthase (205 aa).

Residues 36–40 (QYRRK) and aspartate 68 each bind 4-amino-2-methyl-5-(diphosphooxymethyl)pyrimidine. Mg(2+)-binding residues include aspartate 69 and aspartate 88. Serine 106 provides a ligand contact to 4-amino-2-methyl-5-(diphosphooxymethyl)pyrimidine. 132 to 134 (SPT) provides a ligand contact to 2-[(2R,5Z)-2-carboxy-4-methylthiazol-5(2H)-ylidene]ethyl phosphate. Lysine 135 is a binding site for 4-amino-2-methyl-5-(diphosphooxymethyl)pyrimidine. 2-[(2R,5Z)-2-carboxy-4-methylthiazol-5(2H)-ylidene]ethyl phosphate is bound by residues glycine 162 and 182 to 183 (IS).

This sequence belongs to the thiamine-phosphate synthase family. Mg(2+) is required as a cofactor.

The catalysed reaction is 2-[(2R,5Z)-2-carboxy-4-methylthiazol-5(2H)-ylidene]ethyl phosphate + 4-amino-2-methyl-5-(diphosphooxymethyl)pyrimidine + 2 H(+) = thiamine phosphate + CO2 + diphosphate. The enzyme catalyses 2-(2-carboxy-4-methylthiazol-5-yl)ethyl phosphate + 4-amino-2-methyl-5-(diphosphooxymethyl)pyrimidine + 2 H(+) = thiamine phosphate + CO2 + diphosphate. It carries out the reaction 4-methyl-5-(2-phosphooxyethyl)-thiazole + 4-amino-2-methyl-5-(diphosphooxymethyl)pyrimidine + H(+) = thiamine phosphate + diphosphate. It participates in cofactor biosynthesis; thiamine diphosphate biosynthesis; thiamine phosphate from 4-amino-2-methyl-5-diphosphomethylpyrimidine and 4-methyl-5-(2-phosphoethyl)-thiazole: step 1/1. Its function is as follows. Condenses 4-methyl-5-(beta-hydroxyethyl)thiazole monophosphate (THZ-P) and 2-methyl-4-amino-5-hydroxymethyl pyrimidine pyrophosphate (HMP-PP) to form thiamine monophosphate (TMP). This Caldivirga maquilingensis (strain ATCC 700844 / DSM 13496 / JCM 10307 / IC-167) protein is Thiamine-phosphate synthase.